Consider the following 346-residue polypeptide: Biotin synthase (346 aa).

Positions 1–12 (MPDTATVSSESE) are enriched in polar residues. The segment at 1–21 (MPDTATVSSESEFSGHAHVAA) is disordered. Positions 64–292 (NKVQLCSLLS…QSMVRLSAGR (229 aa)) constitute a Radical SAM core domain. Residues Cys-79, Cys-83, and Cys-86 each contribute to the [4Fe-4S] cluster site. The [2Fe-2S] cluster site is built by Cys-123, Cys-155, Cys-215, and Arg-287.

The protein belongs to the radical SAM superfamily. Biotin synthase family. As to quaternary structure, homodimer. [4Fe-4S] cluster is required as a cofactor. [2Fe-2S] cluster serves as cofactor.

It carries out the reaction (4R,5S)-dethiobiotin + (sulfur carrier)-SH + 2 reduced [2Fe-2S]-[ferredoxin] + 2 S-adenosyl-L-methionine = (sulfur carrier)-H + biotin + 2 5'-deoxyadenosine + 2 L-methionine + 2 oxidized [2Fe-2S]-[ferredoxin]. Its pathway is cofactor biosynthesis; biotin biosynthesis; biotin from 7,8-diaminononanoate: step 2/2. Its function is as follows. Catalyzes the conversion of dethiobiotin (DTB) to biotin by the insertion of a sulfur atom into dethiobiotin via a radical-based mechanism. The sequence is that of Biotin synthase from Myxococcus xanthus (strain DK1622).